The primary structure comprises 863 residues: Nitrate reductase [NADH] (863 aa).

Position 137 (cysteine 137) interacts with Mo-molybdopterin. Residues 484–559 enclose the Cytochrome b5 heme-binding domain; sequence KKYVTKAMLE…LEQFYIAELA (76 aa). Histidine 519 and histidine 542 together coordinate heme. In terms of domain architecture, FAD-binding FR-type spans 602–719; it reads KKQKAAELKE…KGPIGHFHYD (118 aa). FAD is bound by residues 659 to 662, 676 to 680, phenylalanine 688, 693 to 695, and threonine 746; these read RAYT, VVKIY, and KFS.

The protein belongs to the nitrate reductase family. Homodimer. Requires FAD as cofactor. Mo-molybdopterin is required as a cofactor. The cofactor is heme.

The enzyme catalyses nitrite + NAD(+) + H2O = nitrate + NADH + H(+). In terms of biological role, nitrate reductase is a key enzyme involved in the first step of nitrate assimilation in plants, fungi and bacteria. This Ulva prolifera (Green seaweed) protein is Nitrate reductase [NADH].